Reading from the N-terminus, the 382-residue chain is Succinyl-diaminopimelate desuccinylase (382 aa).

Residue His70 coordinates Zn(2+). The active site involves Asp72. Asp103 is a binding site for Zn(2+). Glu137 (proton acceptor) is an active-site residue. Zn(2+) is bound by residues Glu138, Glu166, and His355.

The protein belongs to the peptidase M20A family. DapE subfamily. As to quaternary structure, homodimer. It depends on Zn(2+) as a cofactor. Co(2+) is required as a cofactor.

The enzyme catalyses N-succinyl-(2S,6S)-2,6-diaminopimelate + H2O = (2S,6S)-2,6-diaminopimelate + succinate. The protein operates within amino-acid biosynthesis; L-lysine biosynthesis via DAP pathway; LL-2,6-diaminopimelate from (S)-tetrahydrodipicolinate (succinylase route): step 3/3. Catalyzes the hydrolysis of N-succinyl-L,L-diaminopimelic acid (SDAP), forming succinate and LL-2,6-diaminopimelate (DAP), an intermediate involved in the bacterial biosynthesis of lysine and meso-diaminopimelic acid, an essential component of bacterial cell walls. This Paracoccus denitrificans (strain Pd 1222) protein is Succinyl-diaminopimelate desuccinylase.